The sequence spans 211 residues: Beta-crystallin B3 (211 aa).

Met1 is subject to N-acetylmethionine. Ala2 is subject to N-acetylalanine; in Beta-crystallin B3, N-terminally processed. The tract at residues 2 to 23 (AEQHSTPEQAAAGKSHGGLGGS) is N-terminal arm. Beta/gamma crystallin 'Greek key' domains follow at residues 24–63 (YKVI…QVES) and 64–108 (GPWL…RPLH). The interval 109-113 (IDGPD) is connecting peptide. 2 consecutive Beta/gamma crystallin 'Greek key' domains span residues 114-155 (HKLH…RAIN) and 156-198 (GTWV…RRIR). The tract at residues 200–211 (QKWHKRGVFLSS) is C-terminal arm.

This sequence belongs to the beta/gamma-crystallin family. As to quaternary structure, homo/heterodimer, or complexes of higher-order. The structure of beta-crystallin oligomers seems to be stabilized through interactions between the N-terminal arms.

Its function is as follows. Crystallins are the dominant structural components of the vertebrate eye lens. In Bos taurus (Bovine), this protein is Beta-crystallin B3 (CRYBB3).